The sequence spans 266 residues: Interleukin-1 beta (266 aa).

A propeptide spanning residues 1-113 is cleaved from the precursor; sequence MATVPEPINE…ETSSDELLCD (113 aa).

This sequence belongs to the IL-1 family. Monomer. In its precursor form, weakly interacts with full-length MEFV; the mature cytokine does not interact at all. Interacts with integrins ITGAV:ITGBV and ITGA5:ITGB1; integrin-binding is required for IL1B signaling. Interacts with cargo receptor TMED10; the interaction is direct and is required for the secretion of IL1B mature form. Interacts with HSP90AB1; the interaction facilitates cargo translocation into the ERGIC. Interacts with HSP90B1; the interaction facilitates cargo translocation into the ERGIC.

It is found in the cytoplasm. It localises to the cytosol. Its subcellular location is the secreted. The protein localises to the lysosome. The protein resides in the extracellular exosome. Its function is as follows. Potent pro-inflammatory cytokine. Initially discovered as the major endogenous pyrogen, induces prostaglandin synthesis, neutrophil influx and activation, T-cell activation and cytokine production, B-cell activation and antibody production, and fibroblast proliferation and collagen production. Promotes Th17 differentiation of T-cells. Synergizes with IL12/interleukin-12 to induce IFNG synthesis from T-helper 1 (Th1) cells. Plays a role in angiogenesis by inducing VEGF production synergistically with TNF and IL6. Involved in transduction of inflammation downstream of pyroptosis: its mature form is specifically released in the extracellular milieu by passing through the gasdermin-D (GSDMD) pore. This Ovis aries (Sheep) protein is Interleukin-1 beta (IL1B).